Consider the following 935-residue polypeptide: LPS-assembly protein LptD (935 aa).

The first 33 residues, 1 to 33, serve as a signal peptide directing secretion; it reads MALKSPAFRRKFPLLVTGGLLALQPLATSYVVA. The disordered stretch occupies residues 52-85; it reads KTPVNNLPPRPVHEGAAVSSGTEAAGEAETADRP. Residues 65 to 79 are compositionally biased toward low complexity; it reads EGAAVSSGTEAAGEA.

This sequence belongs to the LptD family. In terms of assembly, component of the lipopolysaccharide transport and assembly complex. Interacts with LptE and LptA.

It is found in the cell outer membrane. Its function is as follows. Together with LptE, is involved in the assembly of lipopolysaccharide (LPS) at the surface of the outer membrane. This is LPS-assembly protein LptD from Pseudomonas putida (strain ATCC 700007 / DSM 6899 / JCM 31910 / BCRC 17059 / LMG 24140 / F1).